Here is an 80-residue protein sequence, read N- to C-terminus: MARCFVVLAFLALAAMSLQVATAQDDLKYFEREVVAELAAQILRVAQGPSAFVAGPHKRNSELINSLLGIPKVMNDAGRR.

An N-terminal signal peptide occupies residues 1 to 23; it reads MARCFVVLAFLALAAMSLQVATA. At A77 the chain carries Alanine amide.

This sequence belongs to the arthropod PDH family. In terms of tissue distribution, eyestalk.

It localises to the secreted. The pigment-dispersing hormone causes the migration of the distal retinal pigment into the proximal end of the pigment chromatophore cells and thus decreases the amount of light entering the retinulas. May also function as a neurotransmitter and/or neuromodulator. This Penaeus vannamei (Whiteleg shrimp) protein is Pigment-dispersing hormone type 2 (PDH2).